The following is a 489-amino-acid chain: Mitochondrial distribution and morphology protein 34 (489 aa).

One can recognise an SMP-LTD domain in the interval 1 to 205; it reads MSFNINWDSI…LPSVLYKFSQ (205 aa).

Belongs to the MDM34 family. As to quaternary structure, component of the ER-mitochondria encounter structure (ERMES) or MDM complex, composed of MMM1, MDM10, MDM12 and MDM34.

The protein localises to the mitochondrion outer membrane. Functionally, component of the ERMES/MDM complex, which serves as a molecular tether to connect the endoplasmic reticulum (ER) and mitochondria. Components of this complex are involved in the control of mitochondrial shape and protein biogenesis, and function in nonvesicular lipid trafficking between the ER and mitochondria. MDM34 is required for the interaction of the ER-resident membrane protein MMM1 and the outer mitochondrial membrane-resident beta-barrel protein MDM10. This chain is Mitochondrial distribution and morphology protein 34, found in Komagataella phaffii (strain GS115 / ATCC 20864) (Yeast).